Consider the following 180-residue polypeptide: uncharacterized protein (180 aa).

Over residues 114–136 (DKISESDSLPDEYKEYVVKHDSD) the composition is skewed to basic and acidic residues. The segment at 114–180 (DKISESDSLP…NFDNPDDNPK (67 aa)) is disordered. The segment covering 137 to 146 (NSDNDSDNSD) has biased composition (acidic residues). Positions 147–173 (NDSNNSDNDSNNSDSDSDNSNDPNNFD) are enriched in low complexity.

This is an uncharacterized protein from Acanthamoeba polyphaga (Amoeba).